The chain runs to 509 residues: Maturase K (509 aa).

The protein belongs to the intron maturase 2 family. MatK subfamily.

The protein resides in the plastid. Its subcellular location is the chloroplast. Its function is as follows. Usually encoded in the trnK tRNA gene intron. Probably assists in splicing its own and other chloroplast group II introns. The sequence is that of Maturase K from Schlumbergera truncata (Thanksgiving cactus).